Consider the following 376-residue polypeptide: Putative glutamate--cysteine ligase 2-1 (376 aa).

The protein belongs to the glutamate--cysteine ligase type 2 family. YbdK subfamily.

It catalyses the reaction L-cysteine + L-glutamate + ATP = gamma-L-glutamyl-L-cysteine + ADP + phosphate + H(+). Its function is as follows. ATP-dependent carboxylate-amine ligase which exhibits weak glutamate--cysteine ligase activity. The polypeptide is Putative glutamate--cysteine ligase 2-1 (Rubrobacter xylanophilus (strain DSM 9941 / JCM 11954 / NBRC 16129 / PRD-1)).